We begin with the raw amino-acid sequence, 330 residues long: Ketol-acid reductoisomerase (NADP(+)) (330 aa).

One can recognise a KARI N-terminal Rossmann domain in the interval 3–184; sequence LPVYYDKDID…GGGRMGVLET (182 aa). Residues 26-29, Ser52, and Ser54 each bind NADP(+); that span reads YGAQ. The active site involves His109. Position 135 (Gly135) interacts with NADP(+). Residues 185–329 enclose the KARI C-terminal knotted domain; the sequence is SFKEECESDL…EILRAPFNHK (145 aa). 4 residues coordinate Mg(2+): Asp193, Glu197, Glu229, and Glu233. Ser254 contributes to the substrate binding site.

This sequence belongs to the ketol-acid reductoisomerase family. Requires Mg(2+) as cofactor.

The catalysed reaction is (2R)-2,3-dihydroxy-3-methylbutanoate + NADP(+) = (2S)-2-acetolactate + NADPH + H(+). The enzyme catalyses (2R,3R)-2,3-dihydroxy-3-methylpentanoate + NADP(+) = (S)-2-ethyl-2-hydroxy-3-oxobutanoate + NADPH + H(+). Its pathway is amino-acid biosynthesis; L-isoleucine biosynthesis; L-isoleucine from 2-oxobutanoate: step 2/4. It functions in the pathway amino-acid biosynthesis; L-valine biosynthesis; L-valine from pyruvate: step 2/4. In terms of biological role, involved in the biosynthesis of branched-chain amino acids (BCAA). Catalyzes an alkyl-migration followed by a ketol-acid reduction of (S)-2-acetolactate (S2AL) to yield (R)-2,3-dihydroxy-isovalerate. In the isomerase reaction, S2AL is rearranged via a Mg-dependent methyl migration to produce 3-hydroxy-3-methyl-2-ketobutyrate (HMKB). In the reductase reaction, this 2-ketoacid undergoes a metal-dependent reduction by NADPH to yield (R)-2,3-dihydroxy-isovalerate. The chain is Ketol-acid reductoisomerase (NADP(+)) from Helicobacter pylori (strain Shi470).